The sequence spans 545 residues: Carboxypeptidase Y homolog A (545 aa).

The first 17 residues, Met1 to Gly17, serve as a signal peptide directing secretion. Residues Pro18–Lys123 constitute a propeptide that is removed on maturation. 5 disulfides stabilise this stretch: Cys177-Cys416, Cys311-Cys325, Cys335-Cys358, Cys342-Cys351, and Cys380-Cys386. Asn208 carries N-linked (GlcNAc...) asparagine glycosylation. Ser264 is an active-site residue. Asp455 is a catalytic residue. 3 N-linked (GlcNAc...) asparagine glycosylation sites follow: Asn485, Asn491, and Asn506. The active site involves His517.

The protein belongs to the peptidase S10 family.

It is found in the vacuole. It carries out the reaction Release of a C-terminal amino acid with broad specificity.. In terms of biological role, vacuolar carboxypeptidase involved in degradation of small peptides. Digests preferentially peptides containing an aliphatic or hydrophobic residue in P1' position, as well as methionine, leucine or phenylalanine in P1 position of ester substrate. This is Carboxypeptidase Y homolog A (CPYA) from Ajellomyces dermatitidis (strain ER-3 / ATCC MYA-2586) (Blastomyces dermatitidis).